Consider the following 539-residue polypeptide: Phospho-2-dehydro-3-deoxyheptonate aldolase 2, chloroplastic (539 aa).

Disordered regions lie at residues 1-23 (MALATNSAAVSGGAAAAASSAPQ) and 41-70 (VHAADPAKSNGPVQAAAKASSPSTVAAPEK). A chloroplast-targeting transit peptide spans 1–54 (MALATNSAAVSGGAAAAASSAPQPRLAATFLPMRRRTVSAVHAADPAKSNGPVQ). Over residues 7–21 (SAAVSGGAAAAASSA) the composition is skewed to low complexity.

The protein belongs to the class-II DAHP synthase family.

The protein resides in the plastid. The protein localises to the chloroplast. It carries out the reaction D-erythrose 4-phosphate + phosphoenolpyruvate + H2O = 7-phospho-2-dehydro-3-deoxy-D-arabino-heptonate + phosphate. It functions in the pathway metabolic intermediate biosynthesis; chorismate biosynthesis; chorismate from D-erythrose 4-phosphate and phosphoenolpyruvate: step 1/7. In Oryza sativa subsp. japonica (Rice), this protein is Phospho-2-dehydro-3-deoxyheptonate aldolase 2, chloroplastic (DAHPS2).